The following is a 372-amino-acid chain: NAD(P)H-quinone oxidoreductase subunit 1 (372 aa).

The next 9 membrane-spanning stretches (helical) occupy residues 27-47 (LLWLPLPMLMMLIVATVGVLV), 65-85 (PEYIGPLGILAPLADGLKLIF), 97-117 (WLFTLGPAVVVIPVFLSYIIV), 128-148 (LAMGVFLWIALSSIAPIGLLM), 176-196 (LALAVLAVAMMSNGLGTVEIV), 204-224 (ILSWNVWRQPIGFLVFWIAAL), 254-274 (FALFYLGAYVNLVLSALLVSV), 308-328 (VLGITMTLIKAYFFVFLAILL), and 347-367 (FLLPVGLVNLLLTAGLKLAFP).

This sequence belongs to the complex I subunit 1 family. In terms of assembly, NDH-1 is composed of at least 11 different subunits.

The protein localises to the cellular thylakoid membrane. It carries out the reaction a plastoquinone + NADH + (n+1) H(+)(in) = a plastoquinol + NAD(+) + n H(+)(out). It catalyses the reaction a plastoquinone + NADPH + (n+1) H(+)(in) = a plastoquinol + NADP(+) + n H(+)(out). Functionally, NDH-1 shuttles electrons from an unknown electron donor, via FMN and iron-sulfur (Fe-S) centers, to quinones in the respiratory and/or the photosynthetic chain. The immediate electron acceptor for the enzyme in this species is believed to be plastoquinone. Couples the redox reaction to proton translocation, and thus conserves the redox energy in a proton gradient. The polypeptide is NAD(P)H-quinone oxidoreductase subunit 1 (Thermosynechococcus vestitus (strain NIES-2133 / IAM M-273 / BP-1)).